Here is a 647-residue protein sequence, read N- to C-terminus: Probable squalene--hopene cyclase (647 aa).

The stretch at 67-108 is one PFTB 1 repeat; it reads EAKIGNYLRRTQGAHGGWPLVHDGPFDMSASVKSYFALKMIG. The active-site Proton donor is the Asp-388. 2 PFTB repeats span residues 413–454 and 530–577; these read IARG…GALL and IRKA…ALLG.

This sequence belongs to the terpene cyclase/mutase family.

The enzyme catalyses squalene = hop-22(29)-ene. It catalyses the reaction squalene + H2O = hopan-22-ol. Its pathway is secondary metabolite biosynthesis; hopanoid biosynthesis. Catalyzes the cyclization of squalene into hopene. Probably part of an operon y4aABCD involved in the synthesis of an isoprenoid compound. The sequence is that of Probable squalene--hopene cyclase (shc) from Sinorhizobium fredii (strain NBRC 101917 / NGR234).